The sequence spans 58 residues: MPSVKVRVGEPIDRALRILKKKIDKEGILKTSKSHRFYDKPSVKKRAKSKAAAKYRGR.

The tract at residues 37–58 (FYDKPSVKKRAKSKAAAKYRGR) is disordered. Residues 43-58 (VKKRAKSKAAAKYRGR) show a composition bias toward basic residues.

It belongs to the bacterial ribosomal protein bS21 family.

The protein is Small ribosomal subunit protein bS21 (rpsU) of Chlamydia muridarum (strain MoPn / Nigg).